Reading from the N-terminus, the 115-residue chain is Large ribosomal subunit protein uL22 (115 aa).

It belongs to the universal ribosomal protein uL22 family. Part of the 50S ribosomal subunit.

In terms of biological role, this protein binds specifically to 23S rRNA; its binding is stimulated by other ribosomal proteins, e.g. L4, L17, and L20. It is important during the early stages of 50S assembly. It makes multiple contacts with different domains of the 23S rRNA in the assembled 50S subunit and ribosome. Functionally, the globular domain of the protein is located near the polypeptide exit tunnel on the outside of the subunit, while an extended beta-hairpin is found that lines the wall of the exit tunnel in the center of the 70S ribosome. The protein is Large ribosomal subunit protein uL22 of Streptomyces griseus subsp. griseus (strain JCM 4626 / CBS 651.72 / NBRC 13350 / KCC S-0626 / ISP 5235).